We begin with the raw amino-acid sequence, 507 residues long: Lysine--tRNA ligase (507 aa).

Residues 26–34 (PSGPIHVGN) carry the 'HIGH' region motif. The short motif at 270 to 274 (AMHSS) is the 'KMSKS' region element.

This sequence belongs to the class-I aminoacyl-tRNA synthetase family.

It is found in the cytoplasm. It catalyses the reaction tRNA(Lys) + L-lysine + ATP = L-lysyl-tRNA(Lys) + AMP + diphosphate. This chain is Lysine--tRNA ligase (lysS), found in Thermoplasma acidophilum (strain ATCC 25905 / DSM 1728 / JCM 9062 / NBRC 15155 / AMRC-C165).